Here is a 186-residue protein sequence, read N- to C-terminus: Large ribosomal subunit protein uL6 (186 aa).

This sequence belongs to the universal ribosomal protein uL6 family. Part of the 50S ribosomal subunit.

This protein binds to the 23S rRNA, and is important in its secondary structure. It is located near the subunit interface in the base of the L7/L12 stalk, and near the tRNA binding site of the peptidyltransferase center. This chain is Large ribosomal subunit protein uL6, found in Sulfurisphaera tokodaii (strain DSM 16993 / JCM 10545 / NBRC 100140 / 7) (Sulfolobus tokodaii).